Here is a 359-residue protein sequence, read N- to C-terminus: 3-dehydroquinate synthase (359 aa).

Residues 71 to 76 (DGEAYK), 105 to 109 (GVIGD), 129 to 130 (TT), K142, and K151 each bind NAD(+). Residues E184, H247, and H264 each coordinate Zn(2+).

Belongs to the sugar phosphate cyclases superfamily. Dehydroquinate synthase family. The cofactor is Co(2+). It depends on Zn(2+) as a cofactor. NAD(+) serves as cofactor.

The protein resides in the cytoplasm. It catalyses the reaction 7-phospho-2-dehydro-3-deoxy-D-arabino-heptonate = 3-dehydroquinate + phosphate. The protein operates within metabolic intermediate biosynthesis; chorismate biosynthesis; chorismate from D-erythrose 4-phosphate and phosphoenolpyruvate: step 2/7. In terms of biological role, catalyzes the conversion of 3-deoxy-D-arabino-heptulosonate 7-phosphate (DAHP) to dehydroquinate (DHQ). The sequence is that of 3-dehydroquinate synthase from Burkholderia multivorans (strain ATCC 17616 / 249).